The following is a 280-amino-acid chain: 2-dehydro-3-deoxyphosphooctonate aldolase (280 aa).

This sequence belongs to the KdsA family.

Its subcellular location is the cytoplasm. It catalyses the reaction D-arabinose 5-phosphate + phosphoenolpyruvate + H2O = 3-deoxy-alpha-D-manno-2-octulosonate-8-phosphate + phosphate. The protein operates within carbohydrate biosynthesis; 3-deoxy-D-manno-octulosonate biosynthesis; 3-deoxy-D-manno-octulosonate from D-ribulose 5-phosphate: step 2/3. Its pathway is bacterial outer membrane biogenesis; lipopolysaccharide biosynthesis. This chain is 2-dehydro-3-deoxyphosphooctonate aldolase, found in Pseudomonas putida (strain W619).